The following is a 442-amino-acid chain: Coiled-coil domain-containing protein 91 (442 aa).

A GGA1-binding motif region spans residues 1-16; it reads MDDDDFGGFEAAETFD. A disordered region spans residues 1–27; sequence MDDDDFGGFEAAETFDGEQGGNQAVSP. S43 and S46 each carry phosphoserine. Residues 48 to 79 form a disordered region; that stretch reads ELILDHDRSSPSSGHLRSDAVISSPDDTRADS. Coiled coils occupy residues 127 to 213 and 248 to 409; these read GVHV…ALSI and CEEL…RLDQ. The tract at residues 211–414 is homodimerization; that stretch reads LSIIVDEYKA…RRLDQVTRQR (204 aa).

As to quaternary structure, homodimer. Interacts with GGA1, GGA2 and AP1G1.

It localises to the membrane. The protein localises to the golgi apparatus. The protein resides in the trans-Golgi network membrane. It is found in the trans-Golgi network. In terms of biological role, involved in the regulation of membrane traffic through the trans-Golgi network (TGN). Functions in close cooperation with the GGAs in the sorting of hydrolases to lysosomes. The polypeptide is Coiled-coil domain-containing protein 91 (Ccdc91) (Rattus norvegicus (Rat)).